A 360-amino-acid chain; its full sequence is Glutamate 5-kinase (360 aa).

Lys-7 provides a ligand contact to ATP. Substrate is bound by residues Ser-47, Asp-134, and Asn-146. ATP is bound by residues 166–167 (TD) and 210–216 (TGGISTK). Residues 275–356 (VGKITLDDGA…SSIIVVHRDV (82 aa)) form the PUA domain.

It belongs to the glutamate 5-kinase family.

It localises to the cytoplasm. It catalyses the reaction L-glutamate + ATP = L-glutamyl 5-phosphate + ADP. It functions in the pathway amino-acid biosynthesis; L-proline biosynthesis; L-glutamate 5-semialdehyde from L-glutamate: step 1/2. Catalyzes the transfer of a phosphate group to glutamate to form L-glutamate 5-phosphate. The sequence is that of Glutamate 5-kinase from Prochlorococcus marinus (strain MIT 9312).